A 183-amino-acid chain; its full sequence is Probable actin-related protein 2/3 complex subunit 3 (183 aa).

This sequence belongs to the ARPC3 family. As to quaternary structure, component of the Arp2/3 complex.

The protein localises to the cytoplasm. It localises to the cytoskeleton. In terms of biological role, functions as a component of the Arp2/3 complex which is involved in regulation of actin polymerization and together with an activating nucleation-promoting factor (NPF) mediates the formation of branched actin networks. The protein is Probable actin-related protein 2/3 complex subunit 3 (arx-5) of Caenorhabditis elegans.